Here is a 197-residue protein sequence, read N- to C-terminus: MIDFDGYRPNVGIVICNKVGQVLWARRFGQNSWQFPQGGINEGENIETAMYRELYEEVGLTKKDVRLLWASKYWLKYKLPKRLVRNDASQPVCIGQKQRWFLLQLVSDESAVNLKTTKSPEFDGWRWVSFWYPVRQVVSFKRDVYRKVMREFAAILLNETRKGETERSVLEASDKREYQRRETRKSARAWNHYPKGK.

Residues 6–150 (GYRPNVGIVI…KRDVYRKVMR (145 aa)) enclose the Nudix hydrolase domain. Positions 38 to 59 (GGINEGENIETAMYRELYEEVG) match the Nudix box motif.

This sequence belongs to the Nudix hydrolase family. RppH subfamily. A divalent metal cation is required as a cofactor.

Functionally, accelerates the degradation of transcripts by removing pyrophosphate from the 5'-end of triphosphorylated RNA, leading to a more labile monophosphorylated state that can stimulate subsequent ribonuclease cleavage. The protein is RNA pyrophosphohydrolase of Haemophilus ducreyi (strain 35000HP / ATCC 700724).